Here is a 288-residue protein sequence, read N- to C-terminus: Homoserine kinase (288 aa).

79 to 89 (PPARGLGSSSA) serves as a coordination point for ATP.

Belongs to the GHMP kinase family. Homoserine kinase subfamily.

Its subcellular location is the cytoplasm. The enzyme catalyses L-homoserine + ATP = O-phospho-L-homoserine + ADP + H(+). Its pathway is amino-acid biosynthesis; L-threonine biosynthesis; L-threonine from L-aspartate: step 4/5. Catalyzes the ATP-dependent phosphorylation of L-homoserine to L-homoserine phosphate. In Listeria monocytogenes serovar 1/2a (strain ATCC BAA-679 / EGD-e), this protein is Homoserine kinase.